A 365-amino-acid polypeptide reads, in one-letter code: Pyruvate dehydrogenase E1 component subunit beta, mitochondrial (365 aa).

Residues 1–24 constitute a mitochondrion transit peptide; that stretch reads MLRTRLIQAASSAQRAFSTSQKAL. Position 85 (E85) interacts with thiamine diphosphate. Residues I138, A186, I187, and D189 each coordinate K(+).

Thiamine diphosphate serves as cofactor. In terms of tissue distribution, expressed in salivary glands (at protein level).

It is found in the mitochondrion matrix. The catalysed reaction is N(6)-[(R)-lipoyl]-L-lysyl-[protein] + pyruvate + H(+) = N(6)-[(R)-S(8)-acetyldihydrolipoyl]-L-lysyl-[protein] + CO2. In terms of biological role, the pyruvate dehydrogenase complex catalyzes the overall conversion of pyruvate to acetyl-CoA and CO(2). Might play a role in regulating synapse structure formation at neuromuscular junctions. Might play a role in maintenance of mitochondrial morphology. The chain is Pyruvate dehydrogenase E1 component subunit beta, mitochondrial from Drosophila melanogaster (Fruit fly).